Consider the following 126-residue polypeptide: Holo-[acyl-carrier-protein] synthase (126 aa).

2 residues coordinate Mg(2+): D9 and E58.

Belongs to the P-Pant transferase superfamily. AcpS family. Mg(2+) is required as a cofactor.

It localises to the cytoplasm. It carries out the reaction apo-[ACP] + CoA = holo-[ACP] + adenosine 3',5'-bisphosphate + H(+). Functionally, transfers the 4'-phosphopantetheine moiety from coenzyme A to a Ser of acyl-carrier-protein. This is Holo-[acyl-carrier-protein] synthase from Enterobacter sp. (strain 638).